The following is a 130-amino-acid chain: MSMQDPIADMFTRIRNGQMAQKVSVTMPSSKLRVAICEVLKAEGYITDFAASGDVKPVLEVTLKYFEGKQVIDTIERVSRPGLRIYKKKDELPKVMGGLGVAIVSTSKGVMTDRAARNAGMGGEIIGYVA.

This sequence belongs to the universal ribosomal protein uS8 family. In terms of assembly, part of the 30S ribosomal subunit. Contacts proteins S5 and S12.

Functionally, one of the primary rRNA binding proteins, it binds directly to 16S rRNA central domain where it helps coordinate assembly of the platform of the 30S subunit. This is Small ribosomal subunit protein uS8 from Alteromonas mediterranea (strain DSM 17117 / CIP 110805 / LMG 28347 / Deep ecotype).